The following is a 130-amino-acid chain: Small ribosomal subunit protein eS8 (130 aa).

The protein belongs to the eukaryotic ribosomal protein eS8 family. As to quaternary structure, part of the 30S ribosomal subunit.

The sequence is that of Small ribosomal subunit protein eS8 from Thermococcus gammatolerans (strain DSM 15229 / JCM 11827 / EJ3).